The following is a 348-amino-acid chain: Dihydroorotase (348 aa).

Zn(2+) is bound by residues His13 and His15. Residues 15 to 17 (HLR) and Asn41 each bind substrate. Lys99, His136, and His174 together coordinate Zn(2+). At Lys99 the chain carries N6-carboxylysine. Substrate is bound at residue His136. Residue Leu219 participates in substrate binding. Zn(2+) is bound at residue Asp247. Asp247 is a catalytic residue. Positions 251 and 263 each coordinate substrate.

The protein belongs to the metallo-dependent hydrolases superfamily. DHOase family. Class II DHOase subfamily. As to quaternary structure, homodimer. Zn(2+) is required as a cofactor.

It catalyses the reaction (S)-dihydroorotate + H2O = N-carbamoyl-L-aspartate + H(+). The protein operates within pyrimidine metabolism; UMP biosynthesis via de novo pathway; (S)-dihydroorotate from bicarbonate: step 3/3. Functionally, catalyzes the reversible cyclization of carbamoyl aspartate to dihydroorotate. This Rhizobium etli (strain ATCC 51251 / DSM 11541 / JCM 21823 / NBRC 15573 / CFN 42) protein is Dihydroorotase.